The sequence spans 358 residues: Ribosomal RNA-processing protein 8 (358 aa).

Residues 1 to 81 (MKPFEVPPWE…PQDSSDDDYE (81 aa)) are disordered. Residues 30-44 (AKKKPKKKKPKKKKA) show a composition bias toward basic residues. S75 and S76 each carry phosphoserine. Residues H185, G220, D238, and C267 each contribute to the S-adenosyl-L-methionine site.

Belongs to the methyltransferase superfamily. RRP8 family.

The protein localises to the nucleus. It localises to the nucleolus. Its function is as follows. Probable methyltransferase required to silence rDNA. This Drosophila melanogaster (Fruit fly) protein is Ribosomal RNA-processing protein 8.